The primary structure comprises 140 residues: Relaxin-3 (140 aa).

Positions 1–23 (MATRGLLLASWALLGALVLQAEA) are cleaved as a signal peptide. Cystine bridges form between C33–C127, C45–C140, and C126–C131. The propeptide at 53 to 116 (ADILAHDPLG…GSPGVVRGSR (64 aa)) is connecting peptide.

The protein belongs to the insulin family. As to quaternary structure, heterodimer of a B chain and an A chain linked by two disulfide bonds. In terms of tissue distribution, highly abundant expression is detected in neurons within the ventomedial dorsal tegmental nucleus and the laterally central gray alpha of the pons. Also detected at much lower levels within the hippocampus.

The protein resides in the secreted. In terms of biological role, may play a role in neuropeptide signaling processes. Ligand for LGR7, relaxin-3 receptor-1 and relaxin-3 receptor-2. This chain is Relaxin-3 (Rln3), found in Rattus norvegicus (Rat).